A 156-amino-acid polypeptide reads, in one-letter code: Small ribosomal subunit protein uS7 (156 aa).

This sequence belongs to the universal ribosomal protein uS7 family. As to quaternary structure, part of the 30S ribosomal subunit. Contacts proteins S9 and S11.

In terms of biological role, one of the primary rRNA binding proteins, it binds directly to 16S rRNA where it nucleates assembly of the head domain of the 30S subunit. Is located at the subunit interface close to the decoding center, probably blocks exit of the E-site tRNA. The protein is Small ribosomal subunit protein uS7 of Mycobacterium leprae (strain TN).